The chain runs to 1088 residues: RNA-directed RNA polymerase (1088 aa).

The 187-residue stretch at 501–687 (LSYGDVTRFL…AKRYIAGGKI (187 aa)) folds into the RdRp catalytic domain.

It belongs to the reoviridae RNA-directed RNA polymerase family. Interacts with VP3 (Potential). Interacts with VP2; this interaction activates VP1. Interacts with NSP5; this interaction is probably necessary for the formation of functional virus factories. Interacts with NSP2; this interaction is weak. Mg(2+) is required as a cofactor.

It is found in the virion. It catalyses the reaction RNA(n) + a ribonucleoside 5'-triphosphate = RNA(n+1) + diphosphate. Its function is as follows. RNA-directed RNA polymerase that is involved in both transcription and genome replication. Together with VP3 capping enzyme, forms an enzyme complex positioned near the channels situated at each of the five-fold vertices of the core. Following infection, the outermost layer of the virus is lost, leaving a double-layered particle (DLP) made up of the core and VP6 shell. VP1 then catalyzes the transcription of fully conservative plus-strand genomic RNAs that are extruded through the DLP's channels into the cytoplasm where they function as mRNAs for translation of viral proteins. One copy of each of the viral (+)RNAs is also recruited during core assembly, together with newly synthesized polymerase complexes and VP2. The polymerase of these novo-formed particles catalyzes the synthesis of complementary minus-strands leading to dsRNA formation. To do so, the polymerase specifically recognizes and binds 4 bases 5'-UGUG-3' in the conserved 3'-sequence of plus-strand RNA templates. VP2 presumably activates the autoinhibited VP1-RNA complex to coordinate packaging and genome replication. Once dsRNA synthesis is complete, the polymerase switches to the transcriptional mode, thus providing secondary transcription. In Homo sapiens (Human), this protein is RNA-directed RNA polymerase.